The following is a 225-amino-acid chain: Transcription factor HES-7 (225 aa).

One can recognise a bHLH domain in the interval 12 to 69 (GPKMLKPLVEKRRRDRINRSLEELRLLLLERTRDQNLRNPKLEKAEILEFAVGYLRER). Positions 92–122 (YLSGFRECLLRLAAFAHDASPAARAQLFSAL) constitute an Orange domain. The interval 125-225 (YLRPKPPRPK…PPPAFWRPWP (101 aa)) is disordered. Positions 147–158 (LDPAAPALGPAL) are enriched in low complexity. The segment covering 212–225 (APLPPPPAFWRPWP) has biased composition (pro residues). The short motif at 221-224 (WRPW) is the WRPW motif element.

As to quaternary structure, transcription repression requires formation of a complex with a corepressor protein of the Groucho/TLE family.

It is found in the nucleus. Transcriptional repressor. Represses transcription from both N box- and E box-containing promoters. May with HES1, cooperatively regulate somite formation in the presomitic mesoderm (PSM). May function as a segmentation clock, which is essential for coordinated somite segmentation. The polypeptide is Transcription factor HES-7 (HES7) (Homo sapiens (Human)).